Reading from the N-terminus, the 371-residue chain is Cathepsin L1 (371 aa).

The N-terminal stretch at 1-48 is a signal peptide; the sequence is MNHLGVFETRFRPRTRHKSQRAQLIPEQITMRTAVLLPLLALLAVAQA. Residues 49 to 153 constitute a propeptide, activation peptide; the sequence is VSFADVVMEE…VTFISPAHVT (105 aa). N-linked (GlcNAc...) asparagine glycosylation occurs at N127. Cystine bridges form between C175–C218, C209–C251, and C310–C360. C178 is a catalytic residue. The active site involves H317. Positions 327–329 are excised as a propeptide; it reads DES. The active site involves N338.

Belongs to the peptidase C1 family. In terms of assembly, dimer of a heavy and a light chain linked by disulfide bonds. As to expression, in the embryo, predominantly expressed in the midgut. Also expressed in larval alimentary organs such as salivary gland and midgut including gastric caeca.

The protein localises to the lysosome. It carries out the reaction Specificity close to that of papain. As compared to cathepsin B, cathepsin L exhibits higher activity toward protein substrates, but has little activity on Z-Arg-Arg-NHMec, and no peptidyl-dipeptidase activity.. Functionally, important for the overall degradation of proteins in lysosomes. Essential for adult male and female fertility. May play a role in digestion. This chain is Cathepsin L1, found in Drosophila melanogaster (Fruit fly).